We begin with the raw amino-acid sequence, 368 residues long: DNA replication and repair protein RecF (368 aa).

30-37 (GNNAQGKT) provides a ligand contact to ATP.

It belongs to the RecF family.

The protein resides in the cytoplasm. In terms of biological role, the RecF protein is involved in DNA metabolism; it is required for DNA replication and normal SOS inducibility. RecF binds preferentially to single-stranded, linear DNA. It also seems to bind ATP. The protein is DNA replication and repair protein RecF of Streptococcus pyogenes serotype M12 (strain MGAS2096).